The sequence spans 258 residues: tRNA pseudouridine synthase A (258 aa).

Asp55 acts as the Nucleophile in catalysis. Tyr113 serves as a coordination point for substrate.

Belongs to the tRNA pseudouridine synthase TruA family. As to quaternary structure, homodimer.

It catalyses the reaction uridine(38/39/40) in tRNA = pseudouridine(38/39/40) in tRNA. Its function is as follows. Formation of pseudouridine at positions 38, 39 and 40 in the anticodon stem and loop of transfer RNAs. The protein is tRNA pseudouridine synthase A of Limosilactobacillus fermentum (strain NBRC 3956 / LMG 18251) (Lactobacillus fermentum).